Here is a 127-residue protein sequence, read N- to C-terminus: Major sperm protein 2 (127 aa).

Ala2 is modified (N-acetylalanine). The 118-residue stretch at Asp9 to Asn126 folds into the MSP domain.

Sperm.

It localises to the cell projection. The protein localises to the pseudopodium. It is found in the cytoplasm. Its subcellular location is the cytoskeleton. In terms of biological role, central component in molecular interactions underlying sperm crawling. Forms an extensive filament system that extends from sperm villipoda, along the leading edge of the pseudopod. The sequence is that of Major sperm protein 2 from Onchocerca volvulus.